The chain runs to 486 residues: Protein DETOXIFICATION 53 (486 aa).

Helical transmembrane passes span 15–35 (CPIVMTSLLIFSRSIISMWFL), 45–65 (GGALAMGFGNITGVSVLKGLS), 94–114 (LLIVVSVPIAVTWLNIEPIFL), 130–150 (MLFFVPELLAQAMLHPLRTFL), 159–179 (LTISAIVSILLHPLFNYVFVV), 187–207 (GVAIAMAFNTMNIDVGLLVYT), 240–260 (AISVCLEYWWYEIMLFLCGLL), 267–287 (VAAMGILIQTTGILYVVPFAI), 312–332 (VIGLILAVAYGLAAAVFVTAL), 346–366 (ILGLISAALPILGLCEIGNSP), 386–406 (VNLCAFYIVGLPVAVTTTFGF), and 413–433 (LWFGLLSAQMTCLVMMLYTLI). The segment at 448–474 (TSAAADKSHSEDETVHAEVQDDDDVSS) is disordered. Basic and acidic residues predominate over residues 453-466 (DKSHSEDETVHAEV).

This sequence belongs to the multi antimicrobial extrusion (MATE) (TC 2.A.66.1) family.

It localises to the membrane. This is Protein DETOXIFICATION 53 from Arabidopsis thaliana (Mouse-ear cress).